The sequence spans 271 residues: Aquaporin-11 (271 aa).

Residues Met-1 to Thr-14 are Cytoplasmic-facing. The chain crosses the membrane as a helical span at residues Cys-15–Ala-35. The Lumenal segment spans residues Arg-36–Arg-41. The helical transmembrane segment at Pro-42 to His-62 threads the bilayer. At Glu-63–Thr-76 the chain is on the cytoplasmic side. The helical transmembrane segment at Trp-77–Ala-97 threads the bilayer. Residues Ser-98 to Ala-166 lie on the Lumenal side of the membrane. Residues Asn-99–Cys-101 carry the NPC motif. Residues Ile-167 to Val-187 traverse the membrane as a helical segment. Topologically, residues Arg-188 to His-194 are cytoplasmic. The helical transmembrane segment at Val-195–Phe-215 threads the bilayer. Residues Asn-216 to Ala-218 carry the NPA motif. At Asn-216–Lys-234 the chain is on the lumenal side. Residues Phe-235–Ser-255 traverse the membrane as a helical segment. Topologically, residues Phe-256 to Glu-271 are cytoplasmic.

This sequence belongs to the MIP/aquaporin (TC 1.A.8) family. AQP11/AQP12 subfamily. In terms of assembly, homodimer; disulfide-linked. Homotetramer. Can also form homomultimer. Post-translationally, not glycosylated. In terms of tissue distribution, expressed in retina specifically at retinal Mueller glial cells. Expressed in adult testis, in the elongated spermatids (ES) and in residual bodies inside Sertoli cells.

The protein resides in the endoplasmic reticulum membrane. It localises to the cytoplasmic vesicle membrane. Its subcellular location is the cell membrane. The enzyme catalyses H2O(in) = H2O(out). It carries out the reaction glycerol(in) = glycerol(out). The catalysed reaction is H2O2(out) = H2O2(in). Functionally, channel protein that facilitates the transport of water, glycerol and hydrogen peroxide across membrane of cell or organelles guaranteeing intracellular homeostasis in several organes like liver, kidney and brain. In situation of stress, participates in endoplasmic reticulum (ER) homeostasis by regulating redox homeostasis through the transport of hydrogen peroxide across the endoplasmic reticulum membrane thereby regulating the oxidative stress through the NADPH oxidase 2 pathway. Plays a role by maintaining an environment suitable for translation or protein foldings in the ER lumen namely by participating in the PKD1 glycosylation processing resulting in regulation of PKD1 membrane trafficking thereby preventing the accumulation of unfolding protein in ER. Plays a role in the proximal tubule function by regulating its endosomal acidification. May play a role in postnatal kidney development. The chain is Aquaporin-11 from Rattus norvegicus (Rat).